We begin with the raw amino-acid sequence, 833 residues long: Glycerol-3-phosphate acyltransferase (833 aa).

An HXXXXD motif motif is present at residues 309 to 314 (CHRSHI).

It belongs to the GPAT/DAPAT family.

It localises to the cell inner membrane. The catalysed reaction is sn-glycerol 3-phosphate + an acyl-CoA = a 1-acyl-sn-glycero-3-phosphate + CoA. It functions in the pathway phospholipid metabolism; CDP-diacylglycerol biosynthesis; CDP-diacylglycerol from sn-glycerol 3-phosphate: step 1/3. The chain is Glycerol-3-phosphate acyltransferase from Pseudomonas savastanoi pv. phaseolicola (strain 1448A / Race 6) (Pseudomonas syringae pv. phaseolicola (strain 1448A / Race 6)).